Here is a 281-residue protein sequence, read N- to C-terminus: Insecticidal crystal toxin protein (281 aa).

Antigenic epitope stretches follow at residues 54-78 (NYSH…VYTF), 91-104 (IYTH…AVKA), 108-116 (GTASKVVQG), 131-148 (FKIT…FIRI), 160-172 (AVIN…VAEL), 189-196 (KYKDFQYL), 208-216 (QNISLVFNR), 221-236 (TNTT…LPIT), and 247-256 (KLETVQQIIN).

Belongs to the delta endotoxin family.

Promotes colloidosmotic lysis by binding to the midgut epithelial cells of insects. Active against Mamestra brassicae. The chain is Insecticidal crystal toxin protein from Bacillus thuringiensis subsp. kurstaki.